The following is a 642-amino-acid chain: MPVITLPDGSKREFANAVSTLDVAADIGPGLAKACIAGRVNGELKDACDLIETDVDLAIITVKDDEGVEILRHSCAHLLGHAIKQMWPETKMAIGPVIDNGFYYDVDLDHKLTEEDVAELEKRMLALAKTNYDVVKRVVSWQEARDTFESRGESYKMAILDENISKDDQPALYHHEEYTDMCRGPHVPNMKFCHHFKLMSVAGAYWRGNSDNKMLQRIYGTAWADKKALKAHLTRLEEAAKRDHRKIGKQLDLYHMQEEAPGMVFWHNDGWSLFLELERFIRQKLGQYTYQEVKGPLMMDRVLWERSGHWDKYSEAMFTTHSENREYAVKPMNCPGHVQIFNQGLKSYRDLPLRMAEFGCCHRNEPSGSLHGLMRVRGFTQDDAHIFCTEEQVQQEVSGCIKMVYDTYATFGFHDIVVKLSTRPEKRIGDDAMWDRAEQALMDALKANDIEYEILPGEGAFYGPKIEFTLHDCLDRAWQCGTVQLDYALPGRLGATYVAEDNSRQTPVMIHRAILGSLERFLGILIEEYAGKFPTWLAPVQAVVMNITDKQSEYVDEVVKLFKDQGIRASKDLRNEKIGFKIREHTLRRVPYLLVVGDQEMENREVAVRTRDGVDLGKIKIDQFAAMVKEQISLRSLNLLEE.

One can recognise a TGS domain in the interval 1–61 (MPVITLPDGS…ETDVDLAIIT (61 aa)). The interval 243-534 (DHRKIGKQLD…LIEEYAGKFP (292 aa)) is catalytic. Residues cysteine 334, histidine 385, and histidine 511 each contribute to the Zn(2+) site.

Belongs to the class-II aminoacyl-tRNA synthetase family. In terms of assembly, homodimer. Zn(2+) is required as a cofactor.

The protein resides in the cytoplasm. The enzyme catalyses tRNA(Thr) + L-threonine + ATP = L-threonyl-tRNA(Thr) + AMP + diphosphate + H(+). Catalyzes the attachment of threonine to tRNA(Thr) in a two-step reaction: L-threonine is first activated by ATP to form Thr-AMP and then transferred to the acceptor end of tRNA(Thr). Also edits incorrectly charged L-seryl-tRNA(Thr). The chain is Threonine--tRNA ligase from Shewanella loihica (strain ATCC BAA-1088 / PV-4).